The following is a 328-amino-acid chain: Lipoyl synthase (328 aa).

The [4Fe-4S] cluster site is built by Cys-75, Cys-80, Cys-86, Cys-101, Cys-105, Cys-108, and Ser-315. A Radical SAM core domain is found at 87-304; it reads FNHGTATFMI…EREAKKMGYE (218 aa).

Belongs to the radical SAM superfamily. Lipoyl synthase family. The cofactor is [4Fe-4S] cluster.

It is found in the cytoplasm. The enzyme catalyses [[Fe-S] cluster scaffold protein carrying a second [4Fe-4S](2+) cluster] + N(6)-octanoyl-L-lysyl-[protein] + 2 oxidized [2Fe-2S]-[ferredoxin] + 2 S-adenosyl-L-methionine + 4 H(+) = [[Fe-S] cluster scaffold protein] + N(6)-[(R)-dihydrolipoyl]-L-lysyl-[protein] + 4 Fe(3+) + 2 hydrogen sulfide + 2 5'-deoxyadenosine + 2 L-methionine + 2 reduced [2Fe-2S]-[ferredoxin]. It participates in protein modification; protein lipoylation via endogenous pathway; protein N(6)-(lipoyl)lysine from octanoyl-[acyl-carrier-protein]: step 2/2. In terms of biological role, catalyzes the radical-mediated insertion of two sulfur atoms into the C-6 and C-8 positions of the octanoyl moiety bound to the lipoyl domains of lipoate-dependent enzymes, thereby converting the octanoylated domains into lipoylated derivatives. The chain is Lipoyl synthase from Colwellia psychrerythraea (strain 34H / ATCC BAA-681) (Vibrio psychroerythus).